The following is a 473-amino-acid chain: Serine carboxypeptidase-like 42 (473 aa).

Positions 1 to 26 (MASVSWRAVAVAMVVVLLSLQWFAKG) are cleaved as a signal peptide. Disulfide bonds link Cys-87/Cys-346, Cys-247/Cys-264, and Cys-289/Cys-314. Asn-138 carries N-linked (GlcNAc...) asparagine glycosylation. The active site involves Ser-179. Asn-259 carries N-linked (GlcNAc...) asparagine glycosylation. N-linked (GlcNAc...) asparagine glycosylation is found at Asn-335 and Asn-351. Catalysis depends on residues Asp-383 and His-440. N-linked (GlcNAc...) asparagine glycosylation occurs at Asn-465.

The protein belongs to the peptidase S10 family. In terms of tissue distribution, expression not detected.

It localises to the secreted. Its function is as follows. Probable carboxypeptidase. In Arabidopsis thaliana (Mouse-ear cress), this protein is Serine carboxypeptidase-like 42 (SCPL42).